A 302-amino-acid polypeptide reads, in one-letter code: Spheroidin-like protein (302 aa).

The N-terminal stretch at 1-19 is a signal peptide; that stretch reads MIALLIALFAAIHAPAVRS. N-linked (GlcNAc...) asparagine; by host glycans are attached at residues asparagine 193 and asparagine 293.

In terms of assembly, homodimer; disulfide-linked.

The protein resides in the host membrane. In terms of biological role, component of the virus occlusion bodies, which are large proteinaceous structures (polyhedra), that protect the virus from the outside environment for extended periods until they are ingested by insect larvae. In Autographa californica nuclear polyhedrosis virus (AcMNPV), this protein is Spheroidin-like protein (SLP).